The chain runs to 1235 residues: ATP-dependent helicase/nuclease subunit A (1235 aa).

One can recognise a UvrD-like helicase ATP-binding domain in the interval 12 to 482; that stretch reads TLWTDDQWKA…IDLSQNFRSR (471 aa). 33 to 40 contributes to the ATP binding site; that stretch reads AAAGSGKT. Residues 509–800 form the UvrD-like helicase C-terminal domain; sequence AAELTLGANF…RMMTIHASKG (292 aa).

The protein belongs to the helicase family. AddA subfamily. In terms of assembly, heterodimer of AddA and AddB/RexB. The cofactor is Mg(2+).

It carries out the reaction Couples ATP hydrolysis with the unwinding of duplex DNA by translocating in the 3'-5' direction.. It catalyses the reaction ATP + H2O = ADP + phosphate + H(+). The heterodimer acts as both an ATP-dependent DNA helicase and an ATP-dependent, dual-direction single-stranded exonuclease. Recognizes the chi site generating a DNA molecule suitable for the initiation of homologous recombination. The AddA nuclease domain is required for chi fragment generation; this subunit has the helicase and 3' -&gt; 5' nuclease activities. This chain is ATP-dependent helicase/nuclease subunit A, found in Listeria welshimeri serovar 6b (strain ATCC 35897 / DSM 20650 / CCUG 15529 / CIP 8149 / NCTC 11857 / SLCC 5334 / V8).